Reading from the N-terminus, the 434-residue chain is Histidine--tRNA ligase (434 aa).

This sequence belongs to the class-II aminoacyl-tRNA synthetase family. In terms of assembly, homodimer.

It localises to the cytoplasm. The enzyme catalyses tRNA(His) + L-histidine + ATP = L-histidyl-tRNA(His) + AMP + diphosphate + H(+). The chain is Histidine--tRNA ligase from Chlorobium phaeobacteroides (strain BS1).